Here is a 151-residue protein sequence, read N- to C-terminus: IFN signaling evasion protein OPG029 (151 aa).

This sequence belongs to the orthopoxvirus OPG029 family. As to quaternary structure, interacts with host TANK, TBKBP1 and AZI2; these interactions prevent interferon production. Interacts with host STAT2.

Prevents establishment of cellular antiviral state by blocking virus-induced phosphorylation and activation of interferon regulatory factors 3/IRF3 and 7/IRF7, transcription factors critical for the induction of interferons alpha and beta. This blockage is produced through the inhibition of host TBK1, by binding host TBK1 adapter proteins TBKBP1 and AZI2, thereby producing a strong inhibition of the phosphorylation and activation of IRF3 and IRF7. Also acts as an inhibitor of the cellular response to type I IFN by interacting with host STAT2. Mechanistically, exerts its inhibitory effect after host ISGF3 complex (composed of STAT1, STAT2 and IRF9) binding to the interferon stimulated response element (ISRE). This Homo sapiens (Human) protein is IFN signaling evasion protein OPG029 (OPG029).